The chain runs to 590 residues: Protein phosphatase PP2A regulatory subunit A (590 aa).

HEAT repeat units follow at residues 12 to 50 (PIAVLIDELKHDEITYRLNALERLSTIALALGPERTRDE), 89 to 127 (LLSPLENLAATEETVVRDKAVDSLNKVCICLSQEQLEQY), 206 to 244 (FIPLFNSLSNDDQDSVRLLSFDIMVSLAEVLKSDSEIRH), 246 to 284 (LLQPLRSFVSDSSWRTRYMVAANFVKLAKVVGPSLIKDE), 285 to 323 (LIKPFVLLMKDTEQEVRRAIATQIPGFCELLDKRIVLEE), 324 to 362 (IIPVIQELINDPAQHVRAALGMNIGALAPQLGKEKTTEY), 363 to 401 (LLPMFLELLKDENPEVRLNIISKLEVVNKVVGIELLSQS), 402 to 440 (LLPAIVTLAEDKQWRVRLAIIDYIPLLAQQLGVEFFNEK), 480 to 518 (IIPKFLAMRSHPNYLYRMTTIFAISEIAPALNAEVIEKQ), 519 to 551 (ILPTLEQLVNDPIPNIRFNVAKAFEVLKPVLAA), and 562 to 590 (IIPLLEQLTKDNDPDVQYFATQALEQTND).

The protein belongs to the phosphatase 2A regulatory subunit A family. PP2A exists in several trimeric forms, all of which consist of a core composed of a catalytic subunit associated with a 65 kDa (PR65) (Subunit A) and a 55 kDa (PR55) (Subunit B) regulatory subunit.

Its function is as follows. Phosphatase 2A affects a variety of biological processes in the cell such as transcription, cell cycle progression and cellular morphogenesis, and provides an initial identification of critical substrates for this phosphatase. The regulatory subunit may direct the catalytic subunit to distinct, albeit overlapping, subsets of substrates. The protein is Protein phosphatase PP2A regulatory subunit A (paa1) of Schizosaccharomyces pombe (strain 972 / ATCC 24843) (Fission yeast).